Consider the following 252-residue polypeptide: Large ribosomal subunit protein uL10m (252 aa).

Residues 1–24 (MAATLCCRLLPKAGWVPLTQSVRH) constitute a mitochondrion transit peptide.

It belongs to the universal ribosomal protein uL10 family. Component of the mitochondrial ribosome large subunit (39S) which comprises a 16S rRNA and about 50 distinct proteins.

The protein resides in the mitochondrion. This Danio rerio (Zebrafish) protein is Large ribosomal subunit protein uL10m (mrpl10).